The sequence spans 318 residues: L-lactate dehydrogenase (318 aa).

NAD(+)-binding residues include valine 16, aspartate 37, and tyrosine 69. Residues glutamine 86, arginine 92, and 124–127 each bind substrate; that span reads NPVD. NAD(+) is bound by residues 122–124 and serine 147; that span reads ASN. Residue 152-155 participates in substrate binding; sequence DSAR. Histidine 179 serves as the catalytic Proton acceptor. A Phosphotyrosine modification is found at tyrosine 223. Threonine 232 lines the substrate pocket.

The protein belongs to the LDH/MDH superfamily. LDH family. In terms of assembly, homotetramer.

It is found in the cytoplasm. It catalyses the reaction (S)-lactate + NAD(+) = pyruvate + NADH + H(+). Its pathway is fermentation; pyruvate fermentation to lactate; (S)-lactate from pyruvate: step 1/1. In terms of biological role, catalyzes the conversion of lactate to pyruvate. The protein is L-lactate dehydrogenase of Mycoplasma mycoides subsp. mycoides SC (strain CCUG 32753 / NCTC 10114 / PG1).